The primary structure comprises 392 residues: MAATLRIQSDWSQALRRDEGEAWLSCRSPGKPTLYGSLTRRGLSTEGVPDIAASEGFVVGEVTKKSILISCPHENVSTKFLAPYTTFSRIHQKSITCLDISSGGGLGVSTSTDGTMKIWQAANGEIRRLLEGHVYDVNCCRFFPSGLVVLSGGMDAQLKIWSAEDASCVVTFKGHKGGILDTAIVDRGRNVLSCSRDGTARLWDCGKSSCLAVIADCGSPINGIAVGTADDSVNLGTPEKAPSEREIGTEGKILLLAREDKKLQGVGLQSRQPVFLFDGSDAFNCCTFLSSTYFLAGTQDGNIYQLDVRNTNAPIQIIHRSGAPVLSLLPYRDGFIASQGDGTCFIVQQDLDYVIDLTEADCDPVYKVAPWEKQIYTCCRDGVVRRYQLGDL.

5 WD repeats span residues 90-129, 132-171, 174-213, 278-316, and 359-392; these read IHQK…IRRL, GHVY…CVVT, GHKG…CLAV, DGSD…APIQ, and EADC…LGDL.

Belongs to the WD repeat PAAF1/RPN14 family. As to quaternary structure, interacts with proteasome 26S subunit ATPases.

Inhibits proteasome 26S assembly and activity by impairing the association of the 19S regulatory complex with the 20S core. The polypeptide is Proteasomal ATPase-associated factor 1 (PAAF1) (Gallus gallus (Chicken)).